A 145-amino-acid polypeptide reads, in one-letter code: Putative pre-16S rRNA nuclease (145 aa).

It belongs to the YqgF nuclease family.

The protein resides in the cytoplasm. Could be a nuclease involved in processing of the 5'-end of pre-16S rRNA. The chain is Putative pre-16S rRNA nuclease from Prochlorococcus marinus (strain MIT 9211).